The sequence spans 255 residues: 5'-nucleotidase SurE (255 aa).

Positions 8, 9, 40, and 92 each coordinate a divalent metal cation.

This sequence belongs to the SurE nucleotidase family. A divalent metal cation serves as cofactor.

Its subcellular location is the cytoplasm. The enzyme catalyses a ribonucleoside 5'-phosphate + H2O = a ribonucleoside + phosphate. In terms of biological role, nucleotidase that shows phosphatase activity on nucleoside 5'-monophosphates. In Brucella suis (strain ATCC 23445 / NCTC 10510), this protein is 5'-nucleotidase SurE.